Here is a 794-residue protein sequence, read N- to C-terminus: Copper-exporting P-type ATPase (794 aa).

HMA domains are found at residues 5 to 70 and 72 to 138; these read KKTT…YGVL and ETAE…YDAQ. Cys-16, Cys-19, Cys-83, and Cys-86 together coordinate Cu(+). Helical transmembrane passes span 162–182, 187–207, 224–244, 250–270, 411–431, and 438–458; these read IISA…LFGI, IFMN…IIGW, MDVL…YEMV, ANVM…LILF, YFVP…IAFV, and PALV…LGLA. Residue Asp-495 is the 4-aspartylphosphate intermediate of the active site. Mg(2+) contacts are provided by Asp-689 and Asp-693. Helical transmembrane passes span 747 to 766 and 770 to 789; these read LFWA…LGLL and IAGA…ALRL.

It belongs to the cation transport ATPase (P-type) (TC 3.A.3) family. Type IB subfamily.

The protein localises to the cell membrane. It catalyses the reaction Cu(+)(in) + ATP + H2O = Cu(+)(out) + ADP + phosphate + H(+). Its function is as follows. Involved in copper export. The chain is Copper-exporting P-type ATPase (copA) from Staphylococcus saprophyticus subsp. saprophyticus (strain ATCC 15305 / DSM 20229 / NCIMB 8711 / NCTC 7292 / S-41).